We begin with the raw amino-acid sequence, 464 residues long: UDP-N-acetylmuramate--L-alanine ligase (464 aa).

Glycine 123–threonine 129 is an ATP binding site.

Belongs to the MurCDEF family.

The protein resides in the cytoplasm. The enzyme catalyses UDP-N-acetyl-alpha-D-muramate + L-alanine + ATP = UDP-N-acetyl-alpha-D-muramoyl-L-alanine + ADP + phosphate + H(+). The protein operates within cell wall biogenesis; peptidoglycan biosynthesis. Functionally, cell wall formation. In Carboxydothermus hydrogenoformans (strain ATCC BAA-161 / DSM 6008 / Z-2901), this protein is UDP-N-acetylmuramate--L-alanine ligase.